The chain runs to 103 residues: Large ribosomal subunit protein bL21 (103 aa).

The protein belongs to the bacterial ribosomal protein bL21 family. As to quaternary structure, part of the 50S ribosomal subunit. Contacts protein L20.

Functionally, this protein binds to 23S rRNA in the presence of protein L20. This is Large ribosomal subunit protein bL21 from Desulforapulum autotrophicum (strain ATCC 43914 / DSM 3382 / VKM B-1955 / HRM2) (Desulfobacterium autotrophicum).